The chain runs to 448 residues: UDP-N-acetylmuramoylalanine--D-glutamate ligase (448 aa).

Gly116 to Thr122 provides a ligand contact to ATP.

The protein belongs to the MurCDEF family.

Its subcellular location is the cytoplasm. The enzyme catalyses UDP-N-acetyl-alpha-D-muramoyl-L-alanine + D-glutamate + ATP = UDP-N-acetyl-alpha-D-muramoyl-L-alanyl-D-glutamate + ADP + phosphate + H(+). It participates in cell wall biogenesis; peptidoglycan biosynthesis. In terms of biological role, cell wall formation. Catalyzes the addition of glutamate to the nucleotide precursor UDP-N-acetylmuramoyl-L-alanine (UMA). In Pseudomonas fluorescens (strain Pf0-1), this protein is UDP-N-acetylmuramoylalanine--D-glutamate ligase.